The chain runs to 290 residues: Phosphoribulokinase (290 aa).

12–20 (GSSGAGTTS) lines the ATP pocket.

Belongs to the phosphoribulokinase family.

The catalysed reaction is D-ribulose 5-phosphate + ATP = D-ribulose 1,5-bisphosphate + ADP + H(+). It participates in carbohydrate biosynthesis; Calvin cycle. The protein is Phosphoribulokinase (cbbP) of Nitrobacter vulgaris.